Reading from the N-terminus, the 329-residue chain is Putative GTPase Obg (329 aa).

Residues 1 to 159 form the Obg domain; that stretch reads MQFIDQARIM…WPLQLELKLL (159 aa). In terms of domain architecture, OBG-type G spans 160 to 328; sequence AEVGIIGLPN…LKTQIWQQLG (169 aa). GTP-binding positions include 166-173, 191-195, 213-216, 280-283, and 309-311; these read GLPNAGKS, FTTLI, DIPG, SKIE, and SSA. Positions 173 and 193 each coordinate Mg(2+).

Belongs to the TRAFAC class OBG-HflX-like GTPase superfamily. OBG GTPase family. As to quaternary structure, monomer. Requires Mg(2+) as cofactor.

It is found in the plastid. Its subcellular location is the organellar chromatophore. Functionally, an essential GTPase which binds GTP, GDP and possibly (p)ppGpp with moderate affinity, with high nucleotide exchange rates and a fairly low GTP hydrolysis rate. The chain is Putative GTPase Obg from Paulinella chromatophora.